The sequence spans 340 residues: Fructose import permease protein FruG (340 aa).

9 helical membrane passes run 23-43 (IPTL…QALF), 49-69 (LGFI…AVAM), 73-93 (ILTG…AVVG), 101-121 (VPAF…GLLA), 130-150 (MQPF…ASII), 182-202 (LSFN…YVFL), 234-254 (IIYL…TANI), 273-293 (VVIG…SVLG), and 307-327 (FGVP…VFVV).

It belongs to the binding-protein-dependent transport system permease family. As to quaternary structure, the complex is composed of an ATP-binding protein (FruK), two transmembrane proteins (FruF and FruG) and a solute-binding protein (FruE).

It localises to the cell membrane. Part of the high-affinity ABC transporter complex FruEKFG involved in fructose uptake. Can also transport ribose and xylose, with lower affinity. Probably responsible for the translocation of the substrate across the membrane. This Bifidobacterium longum (strain NCC 2705) protein is Fructose import permease protein FruG.